The sequence spans 347 residues: MRIEEDLKLGFKDVLIRPKRSTLKSRSDVELERQFTFKYSGQTWSGVPIIAANMDTVGTFEMAQALAGFDILTAVHKHYTVEEWAAFINTASADVLKHVMVSTGTSDADFEKTVQILALNPALNFVCIDVANGYSEHFVQFVAKAREAWPTKTICAGNVVTGEMCEELILSGADIVKVGIGPGSVCTTRVKTGVGYPQLSAVIECADAAHGLGGMIVSDGGCTMPGDVAKAFGGGADFVMLGGMLAGHEESGGSVVEENGEKFMLFYGMSSESAMNRHVGGVAKYRAAEGKTVKLPLRGPVGNTARDILGGLRSACTYVGASRLKELTKRTTFIRVQEQENRIFNSL.

NADP(+) is bound at residue 108 to 131 (ADFEKTVQILALNPALNFVCIDVA). The K(+) site is built by glycine 181 and glycine 183. The Thioimidate intermediate role is filled by cysteine 186. Position 216-239 (216-239 (IVSDGGCTMPGDVAKAFGGGADFV)) interacts with NADP(+).

This sequence belongs to the IMPDH/GMPR family. GuaC type 1 subfamily. As to quaternary structure, homotetramer.

The catalysed reaction is IMP + NH4(+) + NADP(+) = GMP + NADPH + 2 H(+). Its function is as follows. Catalyzes the irreversible NADPH-dependent deamination of GMP to IMP. It functions in the conversion of nucleobase, nucleoside and nucleotide derivatives of G to A nucleotides, and in maintaining the intracellular balance of A and G nucleotides. The protein is GMP reductase of Salmonella paratyphi C (strain RKS4594).